The chain runs to 201 residues: MACATLKRALDWESMNQRPPKRRRCNPFGQAGSNAGPASPSRDGPSTSAGLPHTPSNRFAKDSTEPSPFSESSLAKMSPDKMAESLCNEIKRLHKRKQLPITSSALERMQDSESSGSEMGPESPRRPDSPQNLMRHGEKALFTFKQVQLICESMIKERENQLRERYESVLTTKLAEQYDAFVKFTYDQIQRRYEAAPSYLS.

The segment at 1–133 (MACATLKRAL…PRRPDSPQNL (133 aa)) is disordered. A Nuclear localization signal motif is present at residues 20–25 (PKRRRC). Phosphoserine is present on residues Ser39 and Ser41. Polar residues-rich tracts occupy residues 44–57 (GPSTSAGLPHTPSN) and 65–75 (EPSPFSESSLA). A Phosphoserine modification is found at Ser67. Positions 112-122 (SESSGSEMGPE) are enriched in low complexity. Phosphoserine occurs at positions 123 and 129.

It belongs to the akirin family. Interacts with dmap1. Interacts with bap60 and rel; interaction is immune stimulation-dependent; activates selected rel target gene promoters. Interacts with bap55; interaction is immune stimulation-dependent. Interacts with twi. Post-translationally, polyubiquitinated via 'Lys-63'-linked ubiquitin by Hyd, promoting interaction with rel. As to expression, ubiquitous.

It localises to the nucleus. Its function is as follows. Molecular adapter that acts as a bridge between a variety of multiprotein complexes, and which is required for embryonic development and for normal innate immune response. Acts as a regulator of embryonic myogenesis by bridging Twist (twi) with the SWI/SNF-like Brahma complex, promoting expression of twi-regulated genes during myogenesis. Effector of immune deficiency pathway (Imd) by acting either downstream of, or at the level of, the NF-kappa-B factor Relish (Rel). Acts by bridging the NF-kappa-B factor Rel and the Brahma complex through bap60 interaction, leading to activation a subset of NF-kappa-B factor Relish (Rel) effector genes. Not part of the Toll pathway. Required for the formation of the heart by promoting expression ot tinman (tin). This is Akirin from Drosophila melanogaster (Fruit fly).